The sequence spans 312 residues: Gamma-soluble NSF attachment protein (312 aa).

The tract at residues 281–312 (KKKAAAPPQAKPEGTAAPAAEEEEDEYAGGLC) is disordered. Positions 285 to 299 (AAPPQAKPEGTAAPA) are enriched in low complexity. A compositionally biased stretch (acidic residues) spans 300–312 (AEEEEDEYAGGLC).

Belongs to the SNAP family. Interacts with RAB11FIP5. Interacts with VTI1A.

The protein resides in the membrane. It localises to the golgi apparatus. In terms of biological role, required for vesicular transport between the endoplasmic reticulum and the Golgi apparatus. This is Gamma-soluble NSF attachment protein from Bos taurus (Bovine).